A 140-amino-acid polypeptide reads, in one-letter code: MQTTWQPGCSYPTSWLSSQESFSKMRTGWRGAIPLRWRNRARNREKPHSPRAVSSPATHSLPPSNPCRLTPTLSSARPREGSCPSKCSCPGGNWSNTALSAELMWAEGRFSGGCLPVYMRQNINPGCQEQWEGEERSRWL.

The segment at 34–88 (PLRWRNRARNREKPHSPRAVSSPATHSLPPSNPCRLTPTLSSARPREGSCPSKCS) is disordered.

Expressed in a range of cell lines, including B-cell lymphoma and prostate.

This is an uncharacterized protein from Homo sapiens (Human).